A 670-amino-acid polypeptide reads, in one-letter code: Serine/threonine-rich protein adg2 (670 aa).

The first 19 residues, 1–19 (MRRLTISGLLISLAKLCAG), serve as a signal peptide directing secretion. N-linked (GlcNAc...) asparagine glycans are attached at residues asparagine 77, asparagine 159, asparagine 204, asparagine 224, asparagine 274, asparagine 297, asparagine 327, asparagine 351, asparagine 370, asparagine 381, asparagine 405, asparagine 424, asparagine 435, asparagine 459, asparagine 478, asparagine 489, and asparagine 513. The interval 526–651 (GSVSSFSSSP…MSLPPSAGSS (126 aa)) is disordered.

Its subcellular location is the secreted. The protein localises to the endoplasmic reticulum. The sequence is that of Serine/threonine-rich protein adg2 (adg2) from Schizosaccharomyces pombe (strain 972 / ATCC 24843) (Fission yeast).